We begin with the raw amino-acid sequence, 502 residues long: Protein YdgA (502 aa).

The N-terminal stretch at 1-19 (MNKSLVAVGVIVALGVVWT) is a signal peptide.

To E.coli YihF and H.influenzae HI_1236. As to quaternary structure, homodimer.

The protein localises to the cell inner membrane. This Escherichia coli (strain K12) protein is Protein YdgA (ydgA).